Here is a 322-residue protein sequence, read N- to C-terminus: Phosphatidylserine decarboxylase proenzyme (322 aa).

Active-site charge relay system; for autoendoproteolytic cleavage activity residues include D90, H147, and S254. The active-site Schiff-base intermediate with substrate; via pyruvic acid; for decarboxylase activity is the S254. S254 bears the Pyruvic acid (Ser); by autocatalysis mark. The interval 293 to 322 (PDAEPAPLPAEEIEAEHDASPLVDDKKDQV) is disordered. Positions 308–322 (EHDASPLVDDKKDQV) are enriched in basic and acidic residues.

It belongs to the phosphatidylserine decarboxylase family. PSD-B subfamily. Prokaryotic type I sub-subfamily. Heterodimer of a large membrane-associated beta subunit and a small pyruvoyl-containing alpha subunit. Pyruvate serves as cofactor. Is synthesized initially as an inactive proenzyme. Formation of the active enzyme involves a self-maturation process in which the active site pyruvoyl group is generated from an internal serine residue via an autocatalytic post-translational modification. Two non-identical subunits are generated from the proenzyme in this reaction, and the pyruvate is formed at the N-terminus of the alpha chain, which is derived from the carboxyl end of the proenzyme. The autoendoproteolytic cleavage occurs by a canonical serine protease mechanism, in which the side chain hydroxyl group of the serine supplies its oxygen atom to form the C-terminus of the beta chain, while the remainder of the serine residue undergoes an oxidative deamination to produce ammonia and the pyruvoyl prosthetic group on the alpha chain. During this reaction, the Ser that is part of the protease active site of the proenzyme becomes the pyruvoyl prosthetic group, which constitutes an essential element of the active site of the mature decarboxylase.

Its subcellular location is the cell membrane. The catalysed reaction is a 1,2-diacyl-sn-glycero-3-phospho-L-serine + H(+) = a 1,2-diacyl-sn-glycero-3-phosphoethanolamine + CO2. It participates in phospholipid metabolism; phosphatidylethanolamine biosynthesis; phosphatidylethanolamine from CDP-diacylglycerol: step 2/2. Its function is as follows. Catalyzes the formation of phosphatidylethanolamine (PtdEtn) from phosphatidylserine (PtdSer). The protein is Phosphatidylserine decarboxylase proenzyme of Escherichia coli O9:H4 (strain HS).